The chain runs to 298 residues: N-acetylmuramic acid 6-phosphate etherase (298 aa).

Residues 54–217 (CISAIKNHGR…STVTMIKLGK (164 aa)) form the SIS domain. The Proton donor role is filled by E82. The active site involves E113.

The protein belongs to the GCKR-like family. MurNAc-6-P etherase subfamily. In terms of assembly, homodimer.

The enzyme catalyses N-acetyl-D-muramate 6-phosphate + H2O = N-acetyl-D-glucosamine 6-phosphate + (R)-lactate. It participates in amino-sugar metabolism; N-acetylmuramate degradation. In terms of biological role, specifically catalyzes the cleavage of the D-lactyl ether substituent of MurNAc 6-phosphate, producing GlcNAc 6-phosphate and D-lactate. This is N-acetylmuramic acid 6-phosphate etherase from Petrotoga mobilis (strain DSM 10674 / SJ95).